Reading from the N-terminus, the 199-residue chain is Inosine triphosphate pyrophosphatase (199 aa).

12-17 (TGNAKK) contributes to the ITP binding site. A Mg(2+)-binding site is contributed by E42. Residues K54, 70 to 71 (DT), K87, 146 to 149 (FGWD), K169, and 174 to 175 (HR) each bind ITP.

This sequence belongs to the HAM1 NTPase family. In terms of assembly, homodimer. It depends on Mg(2+) as a cofactor. The cofactor is Mn(2+).

It localises to the cytoplasm. It catalyses the reaction ITP + H2O = IMP + diphosphate + H(+). The enzyme catalyses dITP + H2O = dIMP + diphosphate + H(+). The catalysed reaction is XTP + H2O = XMP + diphosphate + H(+). Pyrophosphatase that hydrolyzes non-canonical purine nucleotides such as inosine triphosphate (ITP), deoxyinosine triphosphate (dITP) or xanthosine 5'-triphosphate (XTP) to their respective monophosphate derivatives. The enzyme does not distinguish between the deoxy- and ribose forms. Probably excludes non-canonical purines from RNA and DNA precursor pools, thus preventing their incorporation into RNA and DNA and avoiding chromosomal lesions. This Monosiga brevicollis (Choanoflagellate) protein is Inosine triphosphate pyrophosphatase.